The following is a 695-amino-acid chain: Adhesion G protein-coupled receptor F4 (695 aa).

The N-terminal stretch at 1–21 (MKMKSQATMICCLVFFLSTEC) is a signal peptide. The Extracellular portion of the chain corresponds to 22 to 406 (SHYRSKIHLK…TDKVLDYITC (385 aa)). N-linked (GlcNAc...) asparagine glycans are attached at residues Asn-61, Asn-169, Asn-177, Asn-209, Asn-229, Asn-250, Asn-257, Asn-263, Asn-264, Asn-286, Asn-309, and Asn-340. A GAIN-B domain is found at 249–397 (HNTSEKSLNF…SILMSSKSMT (149 aa)). 2 disulfide bridges follow: Cys-349-Cys-376 and Cys-364-Cys-378. A GPS region spans residues 349 to 397 (CVGWHSKKRRWDEKACQMMLDIRNEVKCRCNYTSVVMSFSILMSSKSMT). A glycan (N-linked (GlcNAc...) asparagine) is linked at Asn-379. A helical transmembrane segment spans residues 407-427 (IGLSVSILSLVLCLIIEATVW). The Cytoplasmic portion of the chain corresponds to 428–440 (SRVVVTEISYMRH). A helical membrane pass occupies residues 441 to 461 (VCIVNIAVSLLTANVWFIIGS). At 462–485 (HFNIKAQDYNMCVAVTFFSHFFYL) the chain is on the extracellular side. The chain crosses the membrane as a helical span at residues 486 to 506 (SLFFWMLFKALLIIYGILVIF). At 507–515 (RRMMKSRMM) the chain is on the cytoplasmic side. A helical membrane pass occupies residues 516 to 536 (VIGFAIGYGCPLIIAVTTVAI). Topologically, residues 537-561 (TEPEKGYMRPEACWLNWDNTKALLA) are extracellular. The chain crosses the membrane as a helical span at residues 562-582 (FAIPAFVIVAVNLIVVLVVAV). The Cytoplasmic portion of the chain corresponds to 583-606 (NTQRPSIGSSKSQDVVIIMRISKN). Residues 607–627 (VAILTPLLGLTWGFGIATLIE) form a helical membrane-spanning segment. The Extracellular segment spans residues 628–634 (GTSLTFH). A helical transmembrane segment spans residues 635-655 (IIFALLNAFQGFFILLFGTIM). Residues 656–695 (DHKIRDALRMRMSSLKGKSRAAENASLGPTNGSKLMNRQG) lie on the Cytoplasmic side of the membrane. The segment at 674-695 (SRAAENASLGPTNGSKLMNRQG) is disordered. Positions 682–695 (LGPTNGSKLMNRQG) are enriched in polar residues.

Belongs to the G-protein coupled receptor 2 family. Adhesion G-protein coupled receptor (ADGR) subfamily.

Its subcellular location is the membrane. Orphan receptor. The sequence is that of Adhesion G protein-coupled receptor F4 (ADGRF4) from Homo sapiens (Human).